We begin with the raw amino-acid sequence, 778 residues long: Phenylalanine--tRNA ligase beta subunit (778 aa).

Positions 39-150 (YEVPQKIVFG…GKYKIGEEVS (112 aa)) constitute a tRNA-binding domain. The B5 domain occupies 391–467 (HEDKIISLNK…RLVGIDNIPS (77 aa)). Mg(2+) contacts are provided by D445, D451, E454, and E455. The FDX-ACB domain maps to 686–778 (SKYQASFRDL…LKNQLGVGIR (93 aa)).

This sequence belongs to the phenylalanyl-tRNA synthetase beta subunit family. Type 1 subfamily. As to quaternary structure, tetramer of two alpha and two beta subunits. It depends on Mg(2+) as a cofactor.

The protein resides in the cytoplasm. The catalysed reaction is tRNA(Phe) + L-phenylalanine + ATP = L-phenylalanyl-tRNA(Phe) + AMP + diphosphate + H(+). The polypeptide is Phenylalanine--tRNA ligase beta subunit (Sulfurimonas denitrificans (strain ATCC 33889 / DSM 1251) (Thiomicrospira denitrificans (strain ATCC 33889 / DSM 1251))).